A 593-amino-acid polypeptide reads, in one-letter code: Elongation factor 4 (593 aa).

A tr-type G domain is found at 2 to 181 (DKIRNFCIIA…AVIERIPHPQ (180 aa)). GTP contacts are provided by residues 14–19 (DHGKST) and 128–131 (NKCD).

Belongs to the TRAFAC class translation factor GTPase superfamily. Classic translation factor GTPase family. LepA subfamily.

Its subcellular location is the cell inner membrane. It catalyses the reaction GTP + H2O = GDP + phosphate + H(+). Functionally, required for accurate and efficient protein synthesis under certain stress conditions. May act as a fidelity factor of the translation reaction, by catalyzing a one-codon backward translocation of tRNAs on improperly translocated ribosomes. Back-translocation proceeds from a post-translocation (POST) complex to a pre-translocation (PRE) complex, thus giving elongation factor G a second chance to translocate the tRNAs correctly. Binds to ribosomes in a GTP-dependent manner. This Bacteroides fragilis (strain ATCC 25285 / DSM 2151 / CCUG 4856 / JCM 11019 / LMG 10263 / NCTC 9343 / Onslow / VPI 2553 / EN-2) protein is Elongation factor 4.